A 268-amino-acid polypeptide reads, in one-letter code: Ubiquinone biosynthesis protein COQ4 homolog, mitochondrial (268 aa).

Zn(2+) contacts are provided by His-171, Asp-172, His-175, and Glu-187.

It belongs to the COQ4 family. In terms of assembly, component of a multi-subunit COQ enzyme complex. Zn(2+) is required as a cofactor.

The protein localises to the mitochondrion inner membrane. The enzyme catalyses a 4-hydroxy-3-methoxy-5-(all-trans-polyprenyl)benzoate + H(+) = a 2-methoxy-6-(all-trans-polyprenyl)phenol + CO2. Its pathway is cofactor biosynthesis; ubiquinone biosynthesis. Its function is as follows. Lyase that catalyzes the C1-decarboxylation of 4-hydroxy-3-methoxy-5-(all-trans-polyprenyl)benzoic acid into 2-methoxy-6-(all-trans-polyprenyl)phenol during ubiquinone biosynthesis. This Drosophila erecta (Fruit fly) protein is Ubiquinone biosynthesis protein COQ4 homolog, mitochondrial.